Here is a 282-residue protein sequence, read N- to C-terminus: Nudix hydrolase 7 (282 aa).

Positions 101 to 233 constitute a Nudix hydrolase domain; it reads SHVVGAGALV…KNEMFKFMAN (133 aa). The short motif at 139-160 is the Nudix box element; it reads GVINEGEDIWTGVAREVEEETG. Positions 154 and 158 each coordinate Mg(2+).

The protein belongs to the Nudix hydrolase family. As to quaternary structure, homodimer. Interacts with RACK1A, GG1 and GG2. It depends on Mg(2+) as a cofactor. Expressed in stems, leaves, roots, flowers and siliques.

It is found in the nucleus. It localises to the cytoplasm. The protein localises to the cell membrane. It catalyses the reaction ADP-D-ribose + H2O = D-ribose 5-phosphate + AMP + 2 H(+). The enzyme catalyses NAD(+) + H2O = beta-nicotinamide D-ribonucleotide + AMP + 2 H(+). It carries out the reaction NADH + H2O = reduced beta-nicotinamide D-ribonucleotide + AMP + 2 H(+). Its activity is regulated as follows. Not inhibited by fluoride. In terms of biological role, mediates the hydrolysis of some nucleoside diphosphate derivatives. Can use both NADH and ADP-ribose as substrates, but not 8-oxo-dGTP, cyclic ADP-ribose, GDP-mannose, UDP-glucose, ATP, or GTP. Exerts negative control of EDS1 signaling. The sequence is that of Nudix hydrolase 7 (NUDT7) from Arabidopsis thaliana (Mouse-ear cress).